We begin with the raw amino-acid sequence, 95 residues long: Putative RelE-like toxin protein (95 aa).

The protein belongs to the RelE toxin family.

Toxic component of a type II toxin-antitoxin (TA) system. In Escherichia coli, this protein is Putative RelE-like toxin protein.